The sequence spans 352 residues: RNA-binding protein lark (352 aa).

RRM domains are found at residues 7–77 and 86–156; these read FKLF…AAKS and TKIF…VSTS. The segment at 168 to 185 adopts a CCHC-type zinc-finger fold; the sequence is EQCYRCGRSGHWSKECPR. Disordered regions lie at residues 187-228 and 254-352; these read YGSA…LRDR and YQTS…YAPY. Residues Ser-198 and Ser-201 each carry the phosphoserine modification. Pro residues-rich tracts occupy residues 214–224 and 262–277; these read PYPPPPPPPPF and FPPPPISRREPMPLPP. Over residues 279 to 288 the composition is skewed to polar residues; the sequence is LSGSLRSCSV. Phosphoserine is present on residues Ser-315 and Ser-325. Residues 320 to 334 are compositionally biased toward basic and acidic residues; the sequence is GYEDFSRDAFDERMI.

As to expression, expressed in the CNS and in CCAP neurons of the ventral nervous system (VNS), which control insect ecdysis.

It localises to the cytoplasm. The protein resides in the nucleus. Essential RNA-binding protein. May be required for circadian repression of eclosion. Also essential for nurse cell dumping during oogenesis, the process whereby the cytoplasmic contents of nurse cells are transferred to the oocyte late in it's development. This chain is RNA-binding protein lark (lark), found in Drosophila melanogaster (Fruit fly).